A 501-amino-acid chain; its full sequence is Probable cytosol aminopeptidase (501 aa).

Positions 268 and 273 each coordinate Mn(2+). Lys-280 is a catalytic residue. Mn(2+) contacts are provided by Asp-291, Asp-350, and Glu-352. Arg-354 is a catalytic residue.

It belongs to the peptidase M17 family. Mn(2+) is required as a cofactor.

It is found in the cytoplasm. The enzyme catalyses Release of an N-terminal amino acid, Xaa-|-Yaa-, in which Xaa is preferably Leu, but may be other amino acids including Pro although not Arg or Lys, and Yaa may be Pro. Amino acid amides and methyl esters are also readily hydrolyzed, but rates on arylamides are exceedingly low.. It carries out the reaction Release of an N-terminal amino acid, preferentially leucine, but not glutamic or aspartic acids.. Presumably involved in the processing and regular turnover of intracellular proteins. Catalyzes the removal of unsubstituted N-terminal amino acids from various peptides. This is Probable cytosol aminopeptidase from Colwellia psychrerythraea (strain 34H / ATCC BAA-681) (Vibrio psychroerythus).